A 198-amino-acid polypeptide reads, in one-letter code: Na(+)-translocating NADH-quinone reductase subunit E (198 aa).

6 helical membrane passes run 11 to 31 (AVFV…FLAV), 35 to 55 (VSTA…SVPA), 77 to 97 (FLNF…LEMI), 109 to 129 (LGIF…VSFM), 140 to 160 (IVYG…LAGI), and 176 to 196 (LGIT…FAGV).

Belongs to the NqrDE/RnfAE family. As to quaternary structure, composed of six subunits; NqrA, NqrB, NqrC, NqrD, NqrE and NqrF.

The protein resides in the cell inner membrane. It catalyses the reaction a ubiquinone + n Na(+)(in) + NADH + H(+) = a ubiquinol + n Na(+)(out) + NAD(+). NQR complex catalyzes the reduction of ubiquinone-1 to ubiquinol by two successive reactions, coupled with the transport of Na(+) ions from the cytoplasm to the periplasm. NqrA to NqrE are probably involved in the second step, the conversion of ubisemiquinone to ubiquinol. This chain is Na(+)-translocating NADH-quinone reductase subunit E, found in Yersinia pestis bv. Antiqua (strain Nepal516).